The chain runs to 138 residues: Cellular retinoic acid-binding protein 2 (138 aa).

The short motif at 21 to 31 is the Nuclear localization signal element; the sequence is KALGVNMMMRK. A Glycyl lysine isopeptide (Lys-Gly) (interchain with G-Cter in SUMO) cross-link involves residue Lys102. 133 to 135 is an all-trans-retinoate binding site; sequence RVY.

The protein belongs to the calycin superfamily. Fatty-acid binding protein (FABP) family. Interacts with importin alpha. Interacts with RXR and RARA. In terms of processing, sumoylated in response to retinoic acid binding, sumoylation is critical for dissociation from ER and subsequent nuclear translocation. Embryo and skin of adult mouse.

The protein localises to the cytoplasm. It localises to the endoplasmic reticulum. The protein resides in the nucleus. Its function is as follows. Transports retinoic acid to the nucleus. Regulates the access of retinoic acid to the nuclear retinoic acid receptors. This chain is Cellular retinoic acid-binding protein 2 (Crabp2), found in Mus musculus (Mouse).